Here is a 430-residue protein sequence, read N- to C-terminus: Adenylosuccinate synthetase (430 aa).

GTP contacts are provided by residues 12–18 (GDEGKGK) and 40–42 (GHT). Residue Asp-13 is the Proton acceptor of the active site. Positions 13 and 40 each coordinate Mg(2+). Residues 13 to 16 (DEGK), 38 to 41 (NAGH), Thr-128, Arg-142, Gln-223, Thr-238, and Arg-302 contribute to the IMP site. His-41 acts as the Proton donor in catalysis. 298 to 304 (TTTGRPR) lines the substrate pocket. GTP contacts are provided by residues Arg-304, 330-332 (SID), and 412-414 (SVG).

It belongs to the adenylosuccinate synthetase family. In terms of assembly, homodimer. Requires Mg(2+) as cofactor.

The protein resides in the cytoplasm. It catalyses the reaction IMP + L-aspartate + GTP = N(6)-(1,2-dicarboxyethyl)-AMP + GDP + phosphate + 2 H(+). Its pathway is purine metabolism; AMP biosynthesis via de novo pathway; AMP from IMP: step 1/2. Functionally, plays an important role in the de novo pathway of purine nucleotide biosynthesis. Catalyzes the first committed step in the biosynthesis of AMP from IMP. The chain is Adenylosuccinate synthetase from Streptococcus agalactiae serotype III (strain NEM316).